The primary structure comprises 229 residues: Probable GTP-binding protein EngB (229 aa).

The EngB-type G domain occupies 53 to 228 (DLPEVAFAGR…RAEIVRLCID (176 aa)). GTP contacts are provided by residues 61–68 (GRSNVGKS), 88–92 (GRTRE), 106–109 (DLPG), 173–176 (TKAD), and 207–209 (TSS). Mg(2+)-binding residues include Ser-68 and Thr-90.

It belongs to the TRAFAC class TrmE-Era-EngA-EngB-Septin-like GTPase superfamily. EngB GTPase family. The cofactor is Mg(2+).

Its function is as follows. Necessary for normal cell division and for the maintenance of normal septation. The polypeptide is Probable GTP-binding protein EngB (Caulobacter vibrioides (strain NA1000 / CB15N) (Caulobacter crescentus)).